The sequence spans 200 residues: Large ribosomal subunit protein uL13 (200 aa).

This sequence belongs to the universal ribosomal protein uL13 family. In terms of assembly, component of the large ribosomal subunit. Mature ribosomes consist of a small (40S) and a large (60S) subunit. The 40S subunit contains about 32 different proteins and 1 molecule of RNA (18S). The 60S subunit contains 45 different proteins and 3 molecules of RNA (25S, 5.8S and 5S).

The protein localises to the cytoplasm. Its function is as follows. Component of the ribosome, a large ribonucleoprotein complex responsible for the synthesis of proteins in the cell. The small ribosomal subunit (SSU) binds messenger RNAs (mRNAs) and translates the encoded message by selecting cognate aminoacyl-transfer RNA (tRNA) molecules. The large subunit (LSU) contains the ribosomal catalytic site termed the peptidyl transferase center (PTC), which catalyzes the formation of peptide bonds, thereby polymerizing the amino acids delivered by tRNAs into a polypeptide chain. The nascent polypeptides leave the ribosome through a tunnel in the LSU and interact with protein factors that function in enzymatic processing, targeting, and the membrane insertion of nascent chains at the exit of the ribosomal tunnel. The chain is Large ribosomal subunit protein uL13 from Candida albicans (strain SC5314 / ATCC MYA-2876) (Yeast).